Consider the following 372-residue polypeptide: L-selectin (372 aa).

The first 28 residues, methionine 1 to cysteine 28, serve as a signal peptide directing secretion. Residues aspartate 29 to cysteine 38 constitute a propeptide that is removed on maturation. Topologically, residues tryptophan 39 to asparagine 332 are extracellular. Positions arginine 55–cysteine 155 constitute a C-type lectin domain. Cystine bridges form between cysteine 57–cysteine 155, cysteine 128–cysteine 147, cysteine 160–cysteine 171, cysteine 165–cysteine 180, cysteine 182–cysteine 191, cysteine 197–cysteine 241, cysteine 227–cysteine 254, cysteine 259–cysteine 303, and cysteine 289–cysteine 316. N-linked (GlcNAc...) asparagine glycans are attached at residues asparagine 60 and asparagine 104. Ca(2+)-binding residues include glutamate 118, asparagine 120, glutamate 126, asparagine 143, and aspartate 144. The EGF-like domain occupies tyrosine 156–glutamine 192. A glycan (N-linked (GlcNAc...) asparagine) is linked at asparagine 177. Sushi domains follow at residues isoleucine 195–valine 256 and isoleucine 257–lysine 318. N-linked (GlcNAc...) asparagine glycosylation is found at asparagine 232, asparagine 246, and asparagine 271. The chain crosses the membrane as a helical span at residues proline 333–alanine 355. Residues arginine 356–tyrosine 372 lie on the Cytoplasmic side of the membrane.

It belongs to the selectin/LECAM family. Interaction with SELPLG/PSGL1 and PODXL2 is required for promoting recruitment and rolling of leukocytes. This interaction is dependent on the sialyl Lewis X glycan modification of SELPLG and PODXL2, and tyrosine sulfation modifications of SELPLG. Sulfation on 'Tyr-51' of SELPLG is important for L-selectin binding. In terms of processing, N-glycosylated. Expressed in B-cell lines and T-lymphocytes.

The protein localises to the cell membrane. Calcium-dependent lectin that mediates cell adhesion by binding to glycoproteins on neighboring cells. Mediates the adherence of lymphocytes to endothelial cells of high endothelial venules in peripheral lymph nodes. Promotes initial tethering and rolling of leukocytes in endothelia. The polypeptide is L-selectin (SELL) (Homo sapiens (Human)).